The following is a 437-amino-acid chain: Testis-specific Y-encoded-like protein 1 (437 aa).

The disordered stretch occupies residues 1–81 (MSGLDGVKRT…QDAAGRGGTP (81 aa)). Positions 11-26 (TPLQTHSIIISDQVPS) are enriched in polar residues. Basic and acidic residues predominate over residues 28-40 (QDAHQYLRLRDQS). A Glycyl lysine isopeptide (Lys-Gly) (interchain with G-Cter in SUMO2) cross-link involves residue lysine 156.

The protein belongs to the nucleosome assembly protein (NAP) family. Post-translationally, ubiquitinated by the CRL2(APPBP2) complex, which recognizes the Arg-Xaa-Xaa-Gly sequence at the C-terminus, leading to its degradation. Expressed in testis, ovary, liver, spleen, brain, kidney, prostate, lung, liver, and heart.

It localises to the nucleus. The protein resides in the nucleolus. In Homo sapiens (Human), this protein is Testis-specific Y-encoded-like protein 1 (TSPYL1).